The primary structure comprises 425 residues: UDP-N-acetylglucosamine 1-carboxyvinyltransferase (425 aa).

22–23 (KN) is a binding site for phosphoenolpyruvate. Position 93 (Arg93) interacts with UDP-N-acetyl-alpha-D-glucosamine. Residue Cys117 is the Proton donor of the active site. 2-(S-cysteinyl)pyruvic acid O-phosphothioketal is present on Cys117. Residues 122–126 (RPVDL), 162–165 (KVSV), Asp307, and Ile329 contribute to the UDP-N-acetyl-alpha-D-glucosamine site.

This sequence belongs to the EPSP synthase family. MurA subfamily.

It is found in the cytoplasm. The enzyme catalyses phosphoenolpyruvate + UDP-N-acetyl-alpha-D-glucosamine = UDP-N-acetyl-3-O-(1-carboxyvinyl)-alpha-D-glucosamine + phosphate. The protein operates within cell wall biogenesis; peptidoglycan biosynthesis. Functionally, cell wall formation. Adds enolpyruvyl to UDP-N-acetylglucosamine. The protein is UDP-N-acetylglucosamine 1-carboxyvinyltransferase of Pasteurella multocida (strain Pm70).